A 96-amino-acid chain; its full sequence is UPF0235 protein Sputw3181_1321 (96 aa).

It belongs to the UPF0235 family.

The chain is UPF0235 protein Sputw3181_1321 from Shewanella sp. (strain W3-18-1).